A 381-amino-acid chain; its full sequence is Short-chain dehydrogenase anuD (381 aa).

6 residues coordinate NADP(+): Ile84, Lys109, Asp133, Asn158, Tyr244, and Lys248. The Proton acceptor role is filled by Tyr244. The Proton donor role is filled by Tyr244. Lys248 acts as the Lowers pKa of active site Tyr in catalysis.

The protein belongs to the short-chain dehydrogenases/reductases (SDR) family.

Highly reducing polyketide synthase; part of the gene cluster that mediates the biosynthesis of annullatin D, an alkylated aromatic polyketide with a fused dihydrobenzofuran lactone ring system that exhibits potent agonistic activities toward the cannabinoid receptors. AnuD does not seem to play a role within the pathway. The annullatin backbone 2-hydroxymethyl-3-pentylphenol is assembled from one acetyl-CoA starter unit and 5 malonyl-CoA elongation units by cooperation of the highly reducing polyketide synthase anuA, the short-chain dehydrogenase anuB and the oxidoreductase anuC, before being hydroxylated at the C-5 alkyl chain by the cytochrome P450 monooxygenase anuE to form (8S)-annullatin E. The prenyltransferase anuH subsequently installs one isoprenyl group at the benzene ring to form (8S)-annullatin J. Enzymatic or nonenzymatic dihydro-benzofuran ring formation between the prenyl and the phenolic hydroxyl groups in (8S)-annullatin J results in two diastereomers (2S,9S)-annullatin H and compound 12. The intermediate (2S,9S)-annullatin H is then converted to (2S,9S)-annullatin D by the FAD-linked oxidoreductase anuG-catalyzed five-member lactone ring formation. The isomer 12 acts as a substrate for the short-chain dehydrogenase anuF and is oxidized to (2R)-annullatin F, which is subsequently acetylated by an acetyltransferase leading to (2R)-annullatin G formation. The remaining enzymes identified within the cluster, anuD, anuI and anuJ, seem not to be involved in annullatin biosynthesis. The polypeptide is Short-chain dehydrogenase anuD (Penicillium roqueforti (strain FM164)).